The primary structure comprises 319 residues: D-galacturonate reductase (319 aa).

The active-site Proton donor is Tyr-58. Residue His-121 coordinates substrate. NADP(+) is bound at residue 216 to 275 (SPLGAARTKWGDDRVLGSDIIEEIAQAKGKSTAQISLRWVYEQGVSIVTKSYNKERMRQN).

Belongs to the aldo/keto reductase family. As to expression, expressed specifically in the receptacle tissue of the fruit.

The catalysed reaction is L-galactonate + NADP(+) = aldehydo-D-galacturonate + NADPH + H(+). It participates in cofactor biosynthesis; L-ascorbate biosynthesis. Functionally, involved in ascorbic acid (vitamin C) biosynthesis. The sequence is that of D-galacturonate reductase (GALUR) from Fragaria ananassa (Strawberry).